The chain runs to 254 residues: Trypsin (254 aa).

The signal sequence occupies residues 1-16 (MLRFIAVFALVNCALA). The propeptide at 17–26 (GTLPNDLDGR) is activation peptide. In terms of domain architecture, Peptidase S1 spans 27–252 (IVNGVDTTIE…VRSWIEKTAK (226 aa)). Cys53 and Cys69 are disulfide-bonded. Residues His68 and Asp113 each act as charge relay system in the active site. 3 disulfides stabilise this stretch: Cys154-Cys158, Cys178-Cys195, and Cys204-Cys228. The Charge relay system role is filled by Ser208.

This sequence belongs to the peptidase S1 family.

The protein resides in the secreted. It localises to the extracellular space. It catalyses the reaction Preferential cleavage: Arg-|-Xaa, Lys-|-Xaa.. In terms of biological role, involved in digestion of a protein meal. This Sarcophaga bullata (Grey flesh fly) protein is Trypsin.